The following is a 200-amino-acid chain: Glutathione S-transferase domain-containing protein DDB_G0273153/DDB_G0273923 (200 aa).

The 71-residue stretch at 1-71 (MISSIYIFKI…YISNNHNFSG (71 aa)) folds into the GST N-terminal domain. A GST C-terminal domain is found at 73-195 (SLQESARVDD…INSNNINSQS (123 aa)).

It belongs to the GST superfamily.

The protein is Glutathione S-transferase domain-containing protein DDB_G0273153/DDB_G0273923 of Dictyostelium discoideum (Social amoeba).